The following is a 434-amino-acid chain: Trigger factor (434 aa).

The region spanning 163–248 (GDTAVIDFAG…VHDIKRKELP (86 aa)) is the PPIase FKBP-type domain.

Belongs to the FKBP-type PPIase family. Tig subfamily.

It is found in the cytoplasm. The catalysed reaction is [protein]-peptidylproline (omega=180) = [protein]-peptidylproline (omega=0). Involved in protein export. Acts as a chaperone by maintaining the newly synthesized protein in an open conformation. Functions as a peptidyl-prolyl cis-trans isomerase. The protein is Trigger factor of Shouchella clausii (strain KSM-K16) (Alkalihalobacillus clausii).